The chain runs to 131 residues: Small ribosomal subunit protein bS6 (131 aa).

Residues 100–131 (SPMVKAKDERRERREDFANETSDDADAGDSEE) are disordered. A compositionally biased stretch (basic and acidic residues) spans 104-116 (KAKDERRERREDF). Acidic residues predominate over residues 120-131 (TSDDADAGDSEE).

This sequence belongs to the bacterial ribosomal protein bS6 family.

Functionally, binds together with bS18 to 16S ribosomal RNA. The polypeptide is Small ribosomal subunit protein bS6 (Erwinia tasmaniensis (strain DSM 17950 / CFBP 7177 / CIP 109463 / NCPPB 4357 / Et1/99)).